Here is a 1702-residue protein sequence, read N- to C-terminus: Immunoglobulin A1 protease autotransporter (1702 aa).

The N-terminal stretch at 1–25 is a signal peptide; the sequence is MLNKKFKLNFIALTVAYALTPYTEA. One can recognise a Peptidase S6 domain in the interval 26–332; it reads ALVRDDVDYQ…NIYKPEFAKT (307 aa). Ser288 is an active-site residue. Residues 991–1411 form a disordered region; it reads VEKRNQTVDT…GSDRSTVALR (421 aa). The span at 997 to 1021 shows a compositional bias: polar residues; it reads TVDTTNITTPNNIQADVPSVPSNNE. Over residues 1037–1047 the composition is skewed to low complexity; the sequence is TPSETTETVAE. Residues 1049 to 1061 show a composition bias toward basic and acidic residues; the sequence is SKQESKTVEKNEQ. The span at 1082 to 1095 shows a compositional bias: polar residues; the sequence is KANTQTNEVAQSGS. 2 stretches are compositionally biased toward basic and acidic residues: residues 1104–1132 and 1150–1162; these read EIKE…KDEI and APKE…KVEE. A run of 2 repeats spans residues 1109-1116 and 1117-1124. Residues 1109-1124 form a 2 X 8 AA tandem repeats of A-K-V-E-K-E-E-K region; the sequence is AKVEKEEKAKVEKEEK. Polar residues-rich tracts occupy residues 1163–1186 and 1207–1218; these read TQVQ…SPNS and VSKNQTENTTDQ. Positions 1219 to 1234 are enriched in basic and acidic residues; that stretch reads PTEREKTAKVETEKTQ. Polar residues-rich tracts occupy residues 1235–1255, 1263–1305, and 1316–1341; these read EPPQ…TVQP, NVPT…TAIT, and TETA…VANN. Over residues 1360–1378 the composition is skewed to low complexity; it reads ETSAEETTAASTDETTIAD. Positions 1382 to 1392 are enriched in basic residues; sequence RSKPNRRSRRS. Residues 1450-1702 form the Autotransporter domain; the sequence is NNEGQYNVWV…TAELKLSFSF (253 aa).

It is found in the periplasm. It localises to the secreted. The protein localises to the cell surface. The protein resides in the cell outer membrane. The catalysed reaction is Cleavage of immunoglobulin A molecules at certain Pro-|-Xaa bonds in the hinge region. No small molecule substrates are known.. In terms of biological role, virulence factor; cleaves host immunoglobulin A producing intact Fc and Fab fragments. The polypeptide is Immunoglobulin A1 protease autotransporter (iga) (Haemophilus influenzae).